The sequence spans 361 residues: Histidinol-phosphate aminotransferase (361 aa).

N6-(pyridoxal phosphate)lysine is present on lysine 221.

The protein belongs to the class-II pyridoxal-phosphate-dependent aminotransferase family. Histidinol-phosphate aminotransferase subfamily. The cofactor is pyridoxal 5'-phosphate.

The catalysed reaction is L-histidinol phosphate + 2-oxoglutarate = 3-(imidazol-4-yl)-2-oxopropyl phosphate + L-glutamate. Its pathway is amino-acid biosynthesis; L-histidine biosynthesis; L-histidine from 5-phospho-alpha-D-ribose 1-diphosphate: step 7/9. The polypeptide is Histidinol-phosphate aminotransferase (Methanocella arvoryzae (strain DSM 22066 / NBRC 105507 / MRE50)).